The following is a 94-amino-acid chain: DNA-binding protein HU (94 aa).

It belongs to the bacterial histone-like protein family.

In terms of biological role, histone-like DNA-binding protein which is capable of wrapping DNA to stabilize it, and thus to prevent its denaturation under extreme environmental conditions. The sequence is that of DNA-binding protein HU (hup) from Xylella fastidiosa (strain 9a5c).